The following is a 91-amino-acid chain: DNA-directed RNA polymerase subunit omega (91 aa).

The protein belongs to the RNA polymerase subunit omega family. The RNAP catalytic core consists of 2 alpha, 1 beta, 1 beta' and 1 omega subunit. When a sigma factor is associated with the core the holoenzyme is formed, which can initiate transcription.

The enzyme catalyses RNA(n) + a ribonucleoside 5'-triphosphate = RNA(n+1) + diphosphate. In terms of biological role, promotes RNA polymerase assembly. Latches the N- and C-terminal regions of the beta' subunit thereby facilitating its interaction with the beta and alpha subunits. The sequence is that of DNA-directed RNA polymerase subunit omega from Yersinia pestis bv. Antiqua (strain Antiqua).